We begin with the raw amino-acid sequence, 719 residues long: Histone-lysine N-methyltransferase SETDB2 (719 aa).

The segment covering 72–82 has biased composition (polar residues); that stretch reads SQKEVNAQSSD. Residues 72–102 form a disordered region; that stretch reads SQKEVNAQSSDPMPVTQKEQENKSNAFPSTS. In terms of domain architecture, MBD spans 157-229; that stretch reads LNLKGENPLQ…DNFSFNTYVQ (73 aa). Residues 291-364 form the Pre-SET domain; it reads DSCDCSEGCI…LCQNRVVQHG (74 aa). Zn(2+)-binding residues include Cys-293, Cys-295, Cys-299, Cys-305, Cys-307, Cys-345, Cys-349, Cys-351, and Cys-356. An SET domain is found at 367-694; the sequence is VRLQVFKTEQ…ARTELTWDYG (328 aa). S-adenosyl-L-methionine contacts are provided by residues 377-379 and Asp-418; that span reads KGW. The interval 508–547 is disordered; sequence FVSSESVTPEDNDGFKPPREHLNSKTKGAQKDSSSNHVDE. Residues 520–530 show a composition bias toward basic and acidic residues; sequence DGFKPPREHLN. The span at 532–543 shows a compositional bias: polar residues; sequence KTKGAQKDSSSN. Residues Arg-648 and 651–652 contribute to the S-adenosyl-L-methionine site; that span reads NH. Residues Cys-654, Cys-707, Cys-709, and Cys-714 each contribute to the Zn(2+) site.

Belongs to the class V-like SAM-binding methyltransferase superfamily. Ubiquitous. Highest expression in heart, testis and ovary.

It localises to the nucleus. Its subcellular location is the chromosome. The enzyme catalyses N(6),N(6)-dimethyl-L-lysyl(9)-[histone H3] + S-adenosyl-L-methionine = N(6),N(6),N(6)-trimethyl-L-lysyl(9)-[histone H3] + S-adenosyl-L-homocysteine + H(+). Histone methyltransferase involved in left-right axis specification in early development and mitosis. Specifically trimethylates 'Lys-9' of histone H3 (H3K9me3). H3K9me3 is a specific tag for epigenetic transcriptional repression that recruits HP1 (CBX1, CBX3 and/or CBX5) proteins to methylated histones. Contributes to H3K9me3 in both the interspersed repetitive elements and centromere-associated repeats. Plays a role in chromosome condensation and segregation during mitosis. The chain is Histone-lysine N-methyltransferase SETDB2 (SETDB2) from Homo sapiens (Human).